Consider the following 426-residue polypeptide: Glutamate-1-semialdehyde 2,1-aminomutase (426 aa).

At K266 the chain carries N6-(pyridoxal phosphate)lysine.

It belongs to the class-III pyridoxal-phosphate-dependent aminotransferase family. HemL subfamily. It depends on pyridoxal 5'-phosphate as a cofactor.

The protein resides in the cytoplasm. The enzyme catalyses (S)-4-amino-5-oxopentanoate = 5-aminolevulinate. Its pathway is porphyrin-containing compound metabolism; protoporphyrin-IX biosynthesis; 5-aminolevulinate from L-glutamyl-tRNA(Glu): step 2/2. This Methanocaldococcus jannaschii (strain ATCC 43067 / DSM 2661 / JAL-1 / JCM 10045 / NBRC 100440) (Methanococcus jannaschii) protein is Glutamate-1-semialdehyde 2,1-aminomutase (hemL).